The primary structure comprises 371 residues: Cytochrome b (371 aa).

A run of 8 helical transmembrane segments spans residues 25-45, 69-90, 105-125, 170-190, 218-238, 280-300, 312-332, and 339-358; these read FGSMLLACSSMQVLTGFFLAV, WMMQNLHAIGASMFFICIYIHI, WLSGTTLLIMLMVTAFFGXXX, XXXXXXXXXXXXXXXXXXXXX, YKDLLMLSLMVLMLLMTVSFL, LGGALALAMSIMILLTVPFTH, IMQLMFWTLVATFMVITWAAT, and FTMISQIASTIYFLFFIMNP. The heme b site is built by histidine 75 and histidine 89. Residues residue 174 and residue 188 each coordinate heme b.

It belongs to the cytochrome b family. The cytochrome bc1 complex contains 3 respiratory subunits (MT-CYB, CYC1 and UQCRFS1), 2 core proteins (UQCRC1 and UQCRC2) and probably 6 low-molecular weight proteins. Requires heme b as cofactor.

The protein localises to the mitochondrion inner membrane. Component of the ubiquinol-cytochrome c reductase complex (complex III or cytochrome b-c1 complex) that is part of the mitochondrial respiratory chain. The b-c1 complex mediates electron transfer from ubiquinol to cytochrome c. Contributes to the generation of a proton gradient across the mitochondrial membrane that is then used for ATP synthesis. The protein is Cytochrome b (MT-CYB) of Eryx tataricus (Tartar sand boa).